The sequence spans 633 residues: Chaperone protein HtpG (633 aa).

Residues 1–341 (MSATSSKETL…SADLPLNVSR (341 aa)) are a; substrate-binding. A b region spans residues 342–558 (EILQSSRDID…EGDMSANLER (217 aa)). Positions 559–633 (LLKAAGQAAP…LNGLLAMLPG (75 aa)) are c.

This sequence belongs to the heat shock protein 90 family. Homodimer.

The protein localises to the cytoplasm. Molecular chaperone. Has ATPase activity. This is Chaperone protein HtpG from Thiobacillus denitrificans (strain ATCC 25259 / T1).